The primary structure comprises 151 residues: Small ribosomal subunit protein eS6 (151 aa).

Belongs to the eukaryotic ribosomal protein eS6 family.

In Pyrobaculum calidifontis (strain DSM 21063 / JCM 11548 / VA1), this protein is Small ribosomal subunit protein eS6.